The following is a 64-amino-acid chain: Large ribosomal subunit protein bL28 (64 aa).

This sequence belongs to the bacterial ribosomal protein bL28 family.

In Mycoplasmoides gallisepticum (strain R(low / passage 15 / clone 2)) (Mycoplasma gallisepticum), this protein is Large ribosomal subunit protein bL28.